The following is a 140-amino-acid chain: Transcription antitermination protein NusB (140 aa).

The protein belongs to the NusB family.

Its function is as follows. Involved in transcription antitermination. Required for transcription of ribosomal RNA (rRNA) genes. Binds specifically to the boxA antiterminator sequence of the ribosomal RNA (rrn) operons. The chain is Transcription antitermination protein NusB from Streptococcus pneumoniae (strain 70585).